The following is a 317-amino-acid chain: MRETPSVRSARDSWGITESVGATALGVAAARAAETAQADPLIRDEFAFLLVSAAGPTWAQMAVSDPHWLGADADARRIHEISRNYQAVRTHYFDEYFSDVAHAGIRQVVILAAGLDSRAFRLDWPAGTTVFEIDQPKVLEYKTATLDAHGAVAKARYVPVPADLRDDWPAALVEAGFDPAQPTAWLAEGLLPYLPADAQDRLFELVGVNSAPGSRIAVEAFNMSPERYTEERRAQRRARGEQMRKQLDLDIDVDALMYTADDRADAAQWLSEHGWQVEAVPSADEMARLGRPAAEADLAEFGMDGVLMRARLDGERL.

Residues D134 and 163–164 each bind S-adenosyl-L-methionine; that span reads DL.

This sequence belongs to the UPF0677 family.

Functionally, exhibits S-adenosyl-L-methionine-dependent methyltransferase activity. This chain is Putative S-adenosyl-L-methionine-dependent methyltransferase MSMEG_0093, found in Mycolicibacterium smegmatis (strain ATCC 700084 / mc(2)155) (Mycobacterium smegmatis).